Consider the following 295-residue polypeptide: Inositol polyphosphate multikinase IPK2 (295 aa).

The interval 1–21 is disordered; it reads MASDLRPPEHQVAGHRASADK.

This sequence belongs to the inositol phosphokinase (IPK) family.

It catalyses the reaction 1D-myo-inositol 1,4,5-trisphosphate + 2 ATP = 1D-myo-inositol 1,3,4,5,6-pentakisphosphate + 2 ADP + 2 H(+). The catalysed reaction is 1D-myo-inositol 1,3,4,6-tetrakisphosphate + ATP = 1D-myo-inositol 1,3,4,5,6-pentakisphosphate + ADP + H(+). Inositol phosphate kinase with a broad substrate specificity. Phosphorylates inositol 1,4,5-trisphosphate (Ins(1,4,5)P3), inositol 1,4,5,6-tetrakisphosphate (Ins(1,4,5,6)P4), inositol 1,3,4,5-tetrakisphosphate (Ins(1,3,4,5)P4), inositol 1,3,4,6-tetrakisphosphate (Ins(1,3,4,6)P4) and inositol 1,2,3,4,6-pentakisphosphate (Ins(1,2,3,4,6)P5) but not inositol 1,4-bisphosphate (Ins(1,4)P2), inositol 1,3,4-trisphosphate (Ins(1,3,4)P3), inositol 1,2,6-trisphosphate (Ins(1,2,6)P3), inositol 3,4,5,6-tetrakisphosphate (Ins(3,4,5,6)P4), inositol 1,3,4,5,6-pentakisphosphate (Ins(1,3,4,5,6)P5), inositol 1,2,4,5,6-pentakisphosphate (Ins(1,2,4,5,6)P5) or inositol hexakisphosphate (InsP6). Regulates pollen and root development probably through the regulation of InsP3-mediated calcium accumulation. In Oryza sativa subsp. indica (Rice), this protein is Inositol polyphosphate multikinase IPK2.